Reading from the N-terminus, the 273-residue chain is Coiled-coil domain-containing protein 122 (273 aa).

Positions 1-17 (MSDNKERKSQGFPKEDN) are enriched in basic and acidic residues. Positions 1–39 (MSDNKERKSQGFPKEDNQDTSSLADAVEKVAKQQQSQAS) are disordered. 2 coiled-coil regions span residues 24–116 (ADAV…TAQE) and 179–269 (NRIT…RKCI).

In Homo sapiens (Human), this protein is Coiled-coil domain-containing protein 122 (CCDC122).